Here is a 447-residue protein sequence, read N- to C-terminus: Methionine aminopeptidase 2 (447 aa).

Residues 1-86 (MAGATEGEDT…KNKKKKKKKI (86 aa)) form a disordered region. Over residues 8-32 (EDTKVIESKINELNIDKPKLEDNNE) the composition is skewed to basic and acidic residues. Over residues 43–60 (GGDDDDDKEDDDDNDEIT) the composition is skewed to acidic residues. The span at 71–86 (KKKKKNKNKKKKKKKI) shows a compositional bias: basic residues. H198 is a binding site for substrate. D218, D229, and H300 together coordinate a divalent metal cation. Substrate is bound at residue H308. A divalent metal cation is bound by residues E333 and E428.

It belongs to the peptidase M24A family. Methionine aminopeptidase eukaryotic type 2 subfamily. Requires Co(2+) as cofactor. Zn(2+) is required as a cofactor. Mn(2+) serves as cofactor. The cofactor is Fe(2+).

The protein resides in the cytoplasm. The catalysed reaction is Release of N-terminal amino acids, preferentially methionine, from peptides and arylamides.. Functionally, cotranslationally removes the N-terminal methionine from nascent proteins. The N-terminal methionine is often cleaved when the second residue in the primary sequence is small and uncharged (Met-Ala-, Cys, Gly, Pro, Ser, Thr, or Val). The protein is Methionine aminopeptidase 2 of Candida albicans (strain WO-1) (Yeast).